The following is a 275-amino-acid chain: Epidermal growth factor-like protein 7 (275 aa).

The N-terminal stretch at 1–21 (MWGSGELLVAWFLVLAADGTT) is a signal peptide. The 78-residue stretch at 28–105 (SRRVCTVGIS…TSGLPGACGA (78 aa)) folds into the EMI domain. Cystine bridges form between cysteine 32–cysteine 90, cysteine 57–cysteine 63, cysteine 89–cysteine 103, cysteine 108–cysteine 118, cysteine 112–cysteine 124, cysteine 126–cysteine 135, cysteine 142–cysteine 153, and cysteine 149–cysteine 162. Residues 104-136 (GAAICQPPCGNGGSCIRPGHCRCPVGWQGDTCQ) enclose the EGF-like 1 domain. The Cell attachment site signature appears at 131–133 (QGD). An EGF-like 2; calcium-binding domain is found at 138-178 (DVDECSTGEASCPQRCVNTVGSYWCQGWEGQSPSADGTRCL). Residues 173–193 (DGTRCLSKEGPSPVAPNPTAG) form a disordered region. A coiled-coil region spans residues 196–220 (SMAREEVYRLQARVDVLEQKLQLVL).

In terms of assembly, interacts with ITGAV/ITGB3 in an RGD-dependent manner, increasing endothelial cell's motility. Expressed specifically by endothelial cells of the highly vascularized organs heart, lung and kidney.

It is found in the secreted. The protein resides in the extracellular space. Functionally, regulates vascular tubulogenesis in vivo. Inhibits platelet-derived growth factor (PDGF)-BB-induced smooth muscle cell migration and promotes endothelial cell adhesion to the extracellular matrix and angiogenesis. The chain is Epidermal growth factor-like protein 7 (Egfl7) from Mus musculus (Mouse).